A 92-amino-acid polypeptide reads, in one-letter code: MLLQLQIQLFASKKGAGSTRNGRDSHSKRLGAKLSDGQFAKAGAIIYRQRGTKIHPGFNVGRGGDDTLFAKMSGIIKFEKKHGRKKVSVYLQ.

Residues 1-10 (MLLQLQIQLF) constitute a propeptide that is removed on maturation.

It belongs to the bacterial ribosomal protein bL27 family. In terms of processing, the N-terminus is cleaved by ribosomal processing cysteine protease Prp.

This is Large ribosomal subunit protein bL27 from Aster yellows witches'-broom phytoplasma (strain AYWB).